Reading from the N-terminus, the 451-residue chain is Tubulin alpha-1 chain (451 aa).

GTP is bound at residue Gln11. Position 40 is an N6-acetyllysine (Lys40). The GTP site is built by Glu71, Thr145, Thr179, Asn206, and Asn228. Glu71 is a binding site for Mg(2+). Glu254 is a catalytic residue. Positions 429 to 451 (EKDYEEVGAESGEGEEGDEGEEY) are disordered. The span at 431–451 (DYEEVGAESGEGEEGDEGEEY) shows a compositional bias: acidic residues.

The protein belongs to the tubulin family. Dimer of alpha and beta chains. A typical microtubule is a hollow water-filled tube with an outer diameter of 25 nm and an inner diameter of 15 nM. Alpha-beta heterodimers associate head-to-tail to form protofilaments running lengthwise along the microtubule wall with the beta-tubulin subunit facing the microtubule plus end conferring a structural polarity. Microtubules usually have 13 protofilaments but different protofilament numbers can be found in some organisms and specialized cells. The cofactor is Mg(2+). Undergoes a tyrosination/detyrosination cycle, the cyclic removal and re-addition of a C-terminal tyrosine residue by the enzymes tubulin tyrosine carboxypeptidase (TTCP) and tubulin tyrosine ligase (TTL), respectively. Post-translationally, acetylation of alpha chains at Lys-40 stabilizes microtubules and affects affinity and processivity of microtubule motors. This modification has a role in multiple cellular functions, ranging from cell motility, cell cycle progression or cell differentiation to intracellular trafficking and signaling.

It localises to the cytoplasm. The protein localises to the cytoskeleton. The enzyme catalyses GTP + H2O = GDP + phosphate + H(+). Functionally, tubulin is the major constituent of microtubules, a cylinder consisting of laterally associated linear protofilaments composed of alpha- and beta-tubulin heterodimers. Microtubules grow by the addition of GTP-tubulin dimers to the microtubule end, where a stabilizing cap forms. Below the cap, tubulin dimers are in GDP-bound state, owing to GTPase activity of alpha-tubulin. The sequence is that of Tubulin alpha-1 chain (TUBA1) from Anemia phyllitidis (Fern).